A 175-amino-acid polypeptide reads, in one-letter code: MLPPMALPSVSWMLLSCLMLLSQVQGEEPQRELPSARIRCPKGSKAYGSHCYALFLSPKSWTDADLACQKRPSGNLVSVLSGAEGSFVSSLVKSIGNSYSYVWIGLHDPTQGTEPNGEGWEWSSSDVMNYFAWERNPSTISSPGHCASLSRSTAFLRWKDYNCNVRLPYVCKFTD.

The first 26 residues, 1-26, serve as a signal peptide directing secretion; it reads MLPPMALPSVSWMLLSCLMLLSQVQG. Positions 27–37 are excised as a propeptide; sequence EEPQRELPSAR. 3 disulfides stabilise this stretch: Cys-40-Cys-51, Cys-68-Cys-171, and Cys-146-Cys-163. The C-type lectin domain maps to 47–172; that stretch reads YGSHCYALFL…CNVRLPYVCK (126 aa). Residues His-50 and His-107 each contribute to the Zn(2+) site. The sufficient to activate EXTL3 stretch occupies residues 103–118; that stretch reads WIGLHDPTQGTEPNGE. Positions 114–116 match the EPN motif; the sequence is EPN. Positions 121 and 145 each coordinate Zn(2+).

As to quaternary structure, forms a hexameric membrane-permeabilizing oligomeric pore on membrane phospholipids. The hexamer is formed by three dimers related by helical symmetry. Forms filaments, filamentation traps pore complexes and limits damage to host cells. Interacts with EXTL3. Proteolytic processing by trypsin removes an inhibitory N-terminal propeptide and is essential for peptidoglycan binding and antibacterial activity. As to expression, expressed by keratinocytes. Highly expressed in epidermal keratinocytes of psoriasis patients (at protein level). Constitutively expressed in intestine. Low expression is found in healthy pancreas. Overexpressed during the acute phase of pancreatitis and in some patients with chronic pancreatitis.

It localises to the secreted. Its activity is regulated as follows. Lipopolysaccharide inhibits pore-forming activity, explaining why is bactericidal for Gram-positive but not Gram-negative bacteria. Functionally, bactericidal C-type lectin which acts exclusively against Gram-positive bacteria and mediates bacterial killing by binding to surface-exposed carbohydrate moieties of peptidoglycan. Binds membrane phospholipids and kills bacteria by forming a hexameric membrane-permeabilizing oligomeric pore. Acts as a hormone in response to different stimuli like anti-inflammatory signals, such as IL17A, or gut microbiome. Secreted by different cell types to activate its receptor EXTL3 and induce cell specific signaling pathways. Induced by IL17A in keratinocytes, regulates keratinocyte proliferation and differentiation after skin injury via activation of EXTL3-PI3K-AKT signaling pathway. In parallel, inhibits skin inflammation through the inhibition of inflammatory cytokines such as IL6 and TNF. In pancreas, is able to permealize beta-cells membrane and stimulate their proliferation. Its function is as follows. Has bacteriostatic activity. This Homo sapiens (Human) protein is Regenerating islet-derived protein 3-alpha.